A 113-amino-acid polypeptide reads, in one-letter code: Hydrogenase maturation factor HypA (113 aa).

A Ni(2+)-binding site is contributed by His-2. Zn(2+)-binding residues include Cys-73, Cys-76, Cys-89, and Cys-92.

Belongs to the HypA/HybF family.

Its function is as follows. Involved in the maturation of [NiFe] hydrogenases. Required for nickel insertion into the metal center of the hydrogenase. In Chlorobaculum tepidum (strain ATCC 49652 / DSM 12025 / NBRC 103806 / TLS) (Chlorobium tepidum), this protein is Hydrogenase maturation factor HypA.